The following is a 173-amino-acid chain: 2-C-methyl-D-erythritol 2,4-cyclodiphosphate synthase (173 aa).

A divalent metal cation-binding residues include Asp-17 and His-19. 4-CDP-2-C-methyl-D-erythritol 2-phosphate-binding positions include Asp-17–His-19 and His-49–Ser-50. His-57 lines the a divalent metal cation pocket. Residues Phe-76–Asp-80, Thr-147–Glu-150, Phe-154, and Arg-157 each bind 4-CDP-2-C-methyl-D-erythritol 2-phosphate.

Belongs to the IspF family. In terms of assembly, homotrimer. The cofactor is a divalent metal cation.

It carries out the reaction 4-CDP-2-C-methyl-D-erythritol 2-phosphate = 2-C-methyl-D-erythritol 2,4-cyclic diphosphate + CMP. The protein operates within isoprenoid biosynthesis; isopentenyl diphosphate biosynthesis via DXP pathway; isopentenyl diphosphate from 1-deoxy-D-xylulose 5-phosphate: step 4/6. Functionally, involved in the biosynthesis of isopentenyl diphosphate (IPP) and dimethylallyl diphosphate (DMAPP), two major building blocks of isoprenoid compounds. Catalyzes the conversion of 4-diphosphocytidyl-2-C-methyl-D-erythritol 2-phosphate (CDP-ME2P) to 2-C-methyl-D-erythritol 2,4-cyclodiphosphate (ME-CPP) with a corresponding release of cytidine 5-monophosphate (CMP). This Ehrlichia chaffeensis (strain ATCC CRL-10679 / Arkansas) protein is 2-C-methyl-D-erythritol 2,4-cyclodiphosphate synthase.